A 718-amino-acid chain; its full sequence is 1-deoxy-D-xylulose-5-phosphate synthase 1, chloroplastic (718 aa).

The transit peptide at 1–55 directs the protein to the chloroplast; the sequence is MAFCALSFPAHISRATTPAPSDLQKSSSFSSRFYWGADLLRPSQYKVRKIQSGVY. Residues histidine 143 and 184–186 each bind thiamine diphosphate; that span reads GHS. Aspartate 215 contributes to the Mg(2+) binding site. Thiamine diphosphate-binding positions include 216-217, asparagine 244, tyrosine 365, and glutamate 447; that span reads GA. Residue asparagine 244 participates in Mg(2+) binding.

It belongs to the transketolase family. DXPS subfamily. As to quaternary structure, homodimer. Requires Mg(2+) as cofactor. Thiamine diphosphate is required as a cofactor. Expressed in trichomes, leaves, flowers, roots and stems.

Its subcellular location is the plastid. It is found in the chloroplast. It catalyses the reaction D-glyceraldehyde 3-phosphate + pyruvate + H(+) = 1-deoxy-D-xylulose 5-phosphate + CO2. The protein operates within metabolic intermediate biosynthesis; 1-deoxy-D-xylulose 5-phosphate biosynthesis; 1-deoxy-D-xylulose 5-phosphate from D-glyceraldehyde 3-phosphate and pyruvate: step 1/1. Functionally, catalyzes the acyloin condensation reaction between C atoms 2 and 3 of pyruvate and glyceraldehyde 3-phosphate to yield 1-deoxy-D-xylulose-5-phosphate (DXP). In Cannabis sativa (Hemp), this protein is 1-deoxy-D-xylulose-5-phosphate synthase 1, chloroplastic.